Here is a 503-residue protein sequence, read N- to C-terminus: ATP synthase subunit alpha (503 aa).

ATP is bound at residue 169-176 (GDRQTGKT).

The protein belongs to the ATPase alpha/beta chains family. F-type ATPases have 2 components, CF(1) - the catalytic core - and CF(0) - the membrane proton channel. CF(1) has five subunits: alpha(3), beta(3), gamma(1), delta(1), epsilon(1). CF(0) has three main subunits: a(1), b(2) and c(9-12). The alpha and beta chains form an alternating ring which encloses part of the gamma chain. CF(1) is attached to CF(0) by a central stalk formed by the gamma and epsilon chains, while a peripheral stalk is formed by the delta and b chains.

Its subcellular location is the cell membrane. It carries out the reaction ATP + H2O + 4 H(+)(in) = ADP + phosphate + 5 H(+)(out). In terms of biological role, produces ATP from ADP in the presence of a proton gradient across the membrane. The alpha chain is a regulatory subunit. This chain is ATP synthase subunit alpha, found in Macrococcus caseolyticus (strain JCSC5402) (Macrococcoides caseolyticum).